Consider the following 540-residue polypeptide: Protein PALS2 (540 aa).

2 consecutive L27 domains span residues 1–48 and 49–107; these read MQQV…EDSK and LEAV…YDSP. In terms of domain architecture, PDZ spans 130–209; the sequence is ILGIHKRAGE…SVTLKILPSY (80 aa). The SH3 domain maps to 215–284; the sequence is PQQVFVKCHF…PSQFLEEKRK (70 aa). Positions 338–525 constitute a Guanylate kinase-like domain; that stretch reads RKTLVLIGAQ…AFEKLQTAIE (188 aa). Residue Tyr-500 is modified to Phosphotyrosine.

Belongs to the MAGUK family. As to quaternary structure, interacts with CADM1. Interacts with the LIN7 proteins. In terms of tissue distribution, abundant in testis, brain, and kidney with lower levels detectable in other tissues.

It is found in the membrane. The sequence is that of Protein PALS2 from Homo sapiens (Human).